Reading from the N-terminus, the 1411-residue chain is Uveal autoantigen with coiled-coil domains and ankyrin repeats (1411 aa).

Methionine 1 is modified (N-acetylmethionine). Residues 1–30 (MKSLKSRLWKQDAPGPTSPSSPTAVASTQS) form a disordered region. Positions 13–30 (APGPTSPSSPTAVASTQS) are enriched in low complexity. 6 ANK repeats span residues 69–98 (EGRSAFHVVASKGNLECLNAILTHGIDVAT), 102–131 (AGRNALHLAAKYGHALCLQKLLQYNCPTEH), 135–164 (QGRTALHDAVMADCPSSIQLLCDHGASVNA), 168–197 (DGRTPLVLATQMCRPTICQLLIDRGADVNS), 201–230 (QNRTALMLGCEYGCRDAVEVLVKNGADLTL), and 234–263 (LGHDSSYYARIGDNLDILNLLKTASENTNK). Residues 263-301 (KGRELWRKGPPLQQRNLSHTQDEGSVKSTQREQREPHSF) are disordered. Phosphoserine is present on serine 280. Basic and acidic residues predominate over residues 282–301 (TQDEGSVKSTQREQREPHSF). Coiled coils occupy residues 299–379 (HSFQ…NRFK), 442–624 (SENE…LKEL), and 652–1380 (VKRL…AIYR). The disordered stretch occupies residues 1006–1031 (GLKEQLSEQTHKCRQRDEEVKKGKQE).

Component of the apoptosome complex, composed of APAF1, pro-caspase-9 and UACA. In the complex, it probably interacts directly with APAF1. Interacts with LGALS3, ARF6 and ACTB. Interacts with RAB39A. As to expression, highly expressed in heart, liver, kidney and testis. Weakly expressed in lung and skeletal muscle. Not expressed in brain and spleen.

The protein resides in the nucleus. It is found in the cytoplasm. The protein localises to the cytoskeleton. Functionally, regulates APAF1 expression and plays an important role in the regulation of stress-induced apoptosis. Promotes apoptosis by regulating three pathways, apoptosome up-regulation, LGALS3/galectin-3 down-regulation and NF-kappa-B inactivation. Regulates the redistribution of APAF1 into the nucleus after proapoptotic stress. Down-regulates the expression of LGALS3 by inhibiting NFKB1. In terms of biological role, modulates isoactin dynamics to regulate the morphological alterations required for cell growth and motility. Interaction with ARF6 may modulate cell shape and motility after injury. May be involved in multiple neurite formation. The polypeptide is Uveal autoantigen with coiled-coil domains and ankyrin repeats (Uaca) (Mus musculus (Mouse)).